Consider the following 342-residue polypeptide: MESIAKAKSLPNKGRTYDSQRPWNRDSPFSFAAWWSTPSTRYLKVDQPSGRDEHDSLDLEDEDVSNYLASHRERQKRRASCAAKAKVLIIGCAVISLFAIIGALGFALGRRATLPGSCASPAHQNPHTPPHPRPTKGEAHDAGHSGSHSSSSSTNNHHHSHDDSPPPPHVGIDKPKQCGESPDEAQSRGCIFEPQLTAWVAPECAFPAVVAEYQDAVGDMMTEWPWFWDTGLQKAVSPEEFPSLQAGNYSVVYTPYQASHALHCLYCWRKVSYALEHGVDWMDARCHQFYHQRHCAFFIADKLLEMEDWRAAAEVDVQGRLTTWTYPLLYHNCVPLSSTMES.

The disordered stretch occupies residues 1 to 22 (MESIAKAKSLPNKGRTYDSQRP). The helical transmembrane segment at 87-107 (VLIIGCAVISLFAIIGALGFA) threads the bilayer. Residues 118–186 (CASPAHQNPH…QCGESPDEAQ (69 aa)) form a disordered region. Over residues 144–155 (HSGSHSSSSSTN) the composition is skewed to low complexity. N-linked (GlcNAc...) asparagine glycosylation occurs at N248.

The protein localises to the membrane. Its function is as follows. Part of the gene cluster that mediates the biosynthesis of the phomopsins, a group of hexapeptide mycotoxins which infects lupins and causes lupinosis disease in livestock. The role of phomB' within the phomopsins biosynthesis pathway has still to be determined. The pathway starts with the processing of the precursor phomA by several endopeptidases including kexin proteases as well as the cluster-specific S41 family peptidase phomP1 and the oligopeptidase phomG to produce 10 identical copies of the hexapeptide Tyr-Val-Ile-Pro-Ile-Asp. After being excised from the precursor peptide, the core peptides are cyclized and modified post-translationally by enzymes encoded within the gene cluster. The timing and order of proteolysis of the phomA precursor and PTMs are still unknown. Two tyrosinase-like enzymes, phomQ1 and phomQ2, catalyze the chlorination and hydroxylation of Tyr, respectively. PhomYb, is proposed to be involved in the construction of the macrocyclic structure. The other 4 ustYa family proteins may be involved in PTMs that generate the unique structure of phomopsin A. PhomYa is required for the hydroxylation of C-beta of Tyr. PhomYc, phomYd, and phomYe are responsible for the biosynthesis of 2,3-dehydroisoleucine (dIle), 2,3-dehydroaspartic acid (dAsp), and 3,4-dehydroproline (dPro), respectively. While dIle formation by phomYc is indispensable for the installation of dAsp by phomYd, the order of the other PTMs have not been elucidated yet. Most of the biosynthetic enzymes likely have broad substrate specificity, and thus, there might be a metabolic grid from a precursor to phomopsin A. The enzyme(s) responsible for the biosynthesis of 3,4-dehydrovaline (dVal) have also not been identified yet. Finally, phomM acts as an S-adenosylmethionine-dependent alpha-N-methyltransferase that catalyzes two successive N-methylation reactions, converting N-desmethyl-phomopsin A to phomopsin A and phomopsin A further to an N,N-dimethylated congener called phomopsin E. This Diaporthe leptostromiformis (Lupinosis disease fungus) protein is Phomopsin biosynthesis cluster protein B'.